The following is a 585-amino-acid chain: Mycosin-5 (585 aa).

The N-terminal stretch at Met-1 to Ala-39 is a signal peptide. The Peptidase S8 domain maps to Pro-83–Leu-521. Residues Asp-109 and His-141 each act as charge relay system in the active site. The segment covering Val-163–Thr-173 has biased composition (low complexity). Positions Val-163–Phe-269 are disordered. Pro residues-rich tracts occupy residues Pro-196 to Pro-224 and Asn-252 to Asp-267. The active-site Charge relay system is Ser-466. A helical membrane pass occupies residues Val-552–Phe-572.

Belongs to the peptidase S8 family.

The protein resides in the cell membrane. The sequence is that of Mycosin-5 from Mycobacterium tuberculosis (strain ATCC 25618 / H37Rv).